A 274-amino-acid polypeptide reads, in one-letter code: 4-diphosphocytidyl-2-C-methyl-D-erythritol kinase (274 aa).

Lysine 10 is an active-site residue. Residue 101–111 (PTQAGLGGGSA) coordinates ATP. Residue aspartate 143 is part of the active site.

This sequence belongs to the GHMP kinase family. IspE subfamily.

It catalyses the reaction 4-CDP-2-C-methyl-D-erythritol + ATP = 4-CDP-2-C-methyl-D-erythritol 2-phosphate + ADP + H(+). It participates in isoprenoid biosynthesis; isopentenyl diphosphate biosynthesis via DXP pathway; isopentenyl diphosphate from 1-deoxy-D-xylulose 5-phosphate: step 3/6. Its function is as follows. Catalyzes the phosphorylation of the position 2 hydroxy group of 4-diphosphocytidyl-2C-methyl-D-erythritol. In Helicobacter pylori (strain J99 / ATCC 700824) (Campylobacter pylori J99), this protein is 4-diphosphocytidyl-2-C-methyl-D-erythritol kinase.